A 428-amino-acid chain; its full sequence is Glutamate-1-semialdehyde 2,1-aminomutase (428 aa).

Lys-267 is subject to N6-(pyridoxal phosphate)lysine.

The protein belongs to the class-III pyridoxal-phosphate-dependent aminotransferase family. HemL subfamily. As to quaternary structure, homodimer. Pyridoxal 5'-phosphate is required as a cofactor.

Its subcellular location is the cytoplasm. The catalysed reaction is (S)-4-amino-5-oxopentanoate = 5-aminolevulinate. It participates in porphyrin-containing compound metabolism; protoporphyrin-IX biosynthesis; 5-aminolevulinate from L-glutamyl-tRNA(Glu): step 2/2. This Flavobacterium johnsoniae (strain ATCC 17061 / DSM 2064 / JCM 8514 / BCRC 14874 / CCUG 350202 / NBRC 14942 / NCIMB 11054 / UW101) (Cytophaga johnsonae) protein is Glutamate-1-semialdehyde 2,1-aminomutase.